Reading from the N-terminus, the 318-residue chain is uncharacterized protein (318 aa).

A helical membrane pass occupies residues 2–22; it reads ILELIIVLVLLVLAFKSLKIL. The disordered stretch occupies residues 295-318; it reads SDPEDKGVSEVETESQPAEKPEKH.

It belongs to the band 7/mec-2 family.

It localises to the membrane. This is an uncharacterized protein from Methanothermobacter thermautotrophicus (strain ATCC 29096 / DSM 1053 / JCM 10044 / NBRC 100330 / Delta H) (Methanobacterium thermoautotrophicum).